Here is a 385-residue protein sequence, read N- to C-terminus: Probable nitrate transporter NarT (385 aa).

12 consecutive transmembrane segments (helical) span residues 14-34, 47-67, 69-89, 97-117, 139-159, 161-181, 205-225, 246-266, 277-297, 302-322, 330-350, and 359-379; these read TLSLVVGFMAWSIISPLMPYI, IILAIPVILGSILRVPFGYLT, IIGAKWVFFCSFVILLFPIFF, GMLMLSGFFLGVGGAIFSVGV, GNIGTAVSSFLAPPIAGIIGW, TTVRSYLIIIAIFAILMFIFG, LYYLSLWYFITFGAFVAFGLF, GVFIALATFLRPIGGILGDKF, IIMIVGAVILGISSHIALFTI, ISICAGLGNGLIFKLVPSYFA, GIVSMMGGLGGFFPPLVITYV, and LAFILLAIFGVLAFITMGHLY.

Belongs to the major facilitator superfamily. Nitrate/nitrite porter (TC 2.A.1.8) family.

It is found in the cell membrane. Its function is as follows. Probably required for nitrate uptake under anoxic conditions. Also possibly involved in excretion of nitrite produced by the dissimilatory reduction of nitrate. This chain is Probable nitrate transporter NarT (narT), found in Staphylococcus haemolyticus (strain JCSC1435).